Reading from the N-terminus, the 369-residue chain is Thyroid hormone receptor beta (369 aa).

Residues 1–14 (MSGYIPSYLDKDEL) are modulating. 8 residues coordinate Zn(2+): Cys-15, Cys-18, Cys-32, Cys-35, Cys-53, Cys-59, Cys-69, and Cys-72. 2 consecutive NR C4-type zinc fingers follow at residues 15–35 (CVVCGDKATGYHYRCITCEGC) and 53–77 (CKYEGKCVIDKVTRNQCQECRFKKC). Positions 15–89 (CVVCGDKATG…VGMATDLVLD (75 aa)) form a DNA-binding region, nuclear receptor. Residues 125–369 (EEWELIKIVT…PPLFLEVFED (245 aa)) enclose the NR LBD domain. 3,3',5-triiodo-L-thyronine is bound by residues Arg-190, Asn-239, and His-343. The L-thyroxine site is built by Arg-190, Asn-239, and His-343.

The protein belongs to the nuclear hormone receptor family. NR1 subfamily.

It localises to the nucleus. Its function is as follows. Nuclear hormone receptor that can act as a repressor or activator of transcription. High affinity receptor for thyroid hormones, including triiodothyronine and thyroxine. The chain is Thyroid hormone receptor beta (THRB) from Cairina moschata (Muscovy duck).